Consider the following 2477-residue polypeptide: Spectrin alpha chain, non-erythrocytic 1 (2477 aa).

Residues 1–14 (MDPSGVKVLETAED) form an N-terminal domain region. Spectrin repeat units lie at residues 45 to 146 (RFQF…VKLL), 150 to 251 (KLVQ…QGKL), 256 to 358 (EVQR…ARLN), 361 to 465 (YRLQ…QYEQ), 468 to 570 (DLQL…AQLA), 574 to 676 (HLQQ…KLRE), 679 to 781 (QQQQ…QKLA), 785 to 888 (RLQQ…DLED), 891 to 969 (QAQQ…ETGK), and 1096 to 1162 (LFRE…SEGL). Residues 967-1026 (TGKELVLALYDYQEKSPREVTMKKGDILTLLNSTNKDWWKVEVNDRQGFVPAAYVKKLDP) form the SH3 domain. Residue Tyr-1176 is modified to Phosphotyrosine. Spectrin repeat units follow at residues 1234–1336 (EVQR…EKLG), 1339–1442 (HDLQ…MMLD), 1446–1549 (ELQL…KLGE), 1552–1661 (TLQQ…KLKE), 1664–1767 (KQQN…KLNE), 1769–1873 (HRLH…RLEE), 1876–1979 (EYQQ…KLDE), 1983–2086 (FLQF…KLLE), 2097–2199 (LFLT…LELQ), and 2211–2315 (LRQE…NLEQ). Residues 2257-2477 (HQEIRAMRSQ…IEFTRSLFVN (221 aa)) form a C-terminal domain region. EF-hand domains follow at residues 2328-2363 (EALKEFSMMFKHFDKDKSGRLNHQEFKSCLRSLGYD), 2371-2406 (EPDPEFESILDTVDPNRDGHVSLQEYMAFMISRETE), and 2409-2444 (KSSEEIESAFRALSSERKPYVTKEELYQNLTREQAD). Residues Asp-2341, Asp-2343, Ser-2345, Arg-2347, Glu-2352, Asp-2384, Asn-2386, Asp-2388, His-2390, and Glu-2395 each coordinate Ca(2+).

This sequence belongs to the spectrin family. As to quaternary structure, like erythrocyte spectrin, the spectrin-like proteins are capable of forming dimers which can further associate to tetramers. Interacts with ACP1. Post-translationally, phosphorylation of Tyr-1176 decreases sensitivity to cleavage by calpain in vitro.

The protein resides in the cytoplasm. It is found in the cytoskeleton. The protein localises to the cell cortex. Morphologically, spectrin-like proteins appear to be related to spectrin, showing a flexible rod-like structure. They can bind actin but seem to differ in their calmodulin-binding activity. In nonerythroid tissues, spectrins, in association with some other proteins, may play an important role in membrane organization. This is Spectrin alpha chain, non-erythrocytic 1 (SPTAN1) from Gallus gallus (Chicken).